The primary structure comprises 272 residues: Ribosomal RNA small subunit methyltransferase A (272 aa).

S-adenosyl-L-methionine contacts are provided by Asn15, Ile17, Gly42, Glu64, Asp90, and Asn109.

This sequence belongs to the class I-like SAM-binding methyltransferase superfamily. rRNA adenine N(6)-methyltransferase family. RsmA subfamily.

The protein resides in the cytoplasm. It carries out the reaction adenosine(1518)/adenosine(1519) in 16S rRNA + 4 S-adenosyl-L-methionine = N(6)-dimethyladenosine(1518)/N(6)-dimethyladenosine(1519) in 16S rRNA + 4 S-adenosyl-L-homocysteine + 4 H(+). Its function is as follows. Specifically dimethylates two adjacent adenosines (A1518 and A1519) in the loop of a conserved hairpin near the 3'-end of 16S rRNA in the 30S particle. May play a critical role in biogenesis of 30S subunits. In Wolbachia sp. subsp. Drosophila simulans (strain wRi), this protein is Ribosomal RNA small subunit methyltransferase A.